We begin with the raw amino-acid sequence, 369 residues long: Anhydro-N-acetylmuramic acid kinase (369 aa).

Residue 12 to 19 participates in ATP binding; that stretch reads GTSLDGVD.

It belongs to the anhydro-N-acetylmuramic acid kinase family.

It carries out the reaction 1,6-anhydro-N-acetyl-beta-muramate + ATP + H2O = N-acetyl-D-muramate 6-phosphate + ADP + H(+). Its pathway is amino-sugar metabolism; 1,6-anhydro-N-acetylmuramate degradation. It functions in the pathway cell wall biogenesis; peptidoglycan recycling. Its function is as follows. Catalyzes the specific phosphorylation of 1,6-anhydro-N-acetylmuramic acid (anhMurNAc) with the simultaneous cleavage of the 1,6-anhydro ring, generating MurNAc-6-P. Is required for the utilization of anhMurNAc either imported from the medium or derived from its own cell wall murein, and thus plays a role in cell wall recycling. In Escherichia coli O1:K1 / APEC, this protein is Anhydro-N-acetylmuramic acid kinase.